A 293-amino-acid polypeptide reads, in one-letter code: Glycine betaine-binding protein OpuAC (293 aa).

The first 20 residues, 1 to 20 (MLKKIIGIGVSAMLALSLAA), serve as a signal peptide directing secretion. A lipid anchor (N-palmitoyl cysteine) is attached at C21. Residue C21 is the site of S-diacylglycerol cysteine attachment.

In terms of assembly, the complex is composed of two ATP-binding proteins (OpuAA), two transmembrane proteins (OpuAB) and a solute-binding protein (OpuAC). Interacts with FloT.

The protein localises to the cell membrane. Its subcellular location is the membrane raft. Its function is as follows. Involved in a multicomponent binding-protein-dependent transport system for glycine betaine. The polypeptide is Glycine betaine-binding protein OpuAC (opuAC) (Bacillus subtilis (strain 168)).